A 222-amino-acid chain; its full sequence is Riboflavin kinase (222 aa).

The H-T-H motif-like stretch occupies residues 1–92 (MVLAEDLECL…CRLFAHEGGH (92 aa)). The segment at 93-222 (YTLPGIVISG…DRVNVEVAYD (130 aa)) is riboflavin kinase. 102-107 (GLGEGR) is a binding site for CDP. Mg(2+) is bound by residues threonine 131 and asparagine 133. FMN contacts are provided by serine 188 and glutamate 196. Residue 201–204 (VGLR) coordinates CDP.

Belongs to the archaeal riboflavin kinase family. The cofactor is Mg(2+).

It catalyses the reaction riboflavin + CTP = CDP + FMN + H(+). Its pathway is cofactor biosynthesis; FMN biosynthesis; FMN from riboflavin (CTP route): step 1/1. Catalyzes the CTP-dependent phosphorylation of riboflavin (vitamin B2) to form flavin mononucleotide (FMN). The polypeptide is Riboflavin kinase (ribK) (Methanoregula boonei (strain DSM 21154 / JCM 14090 / 6A8)).